Here is an 815-residue protein sequence, read N- to C-terminus: Probable beta-glucosidase G (815 aa).

Residues 1–20 (MASIAHLVVSGLLAATAVNG) form the signal peptide. Residues Asn40, Asn58, Asn229, and Asn276 are each glycosylated (N-linked (GlcNAc...) asparagine). Residue Asp304 is part of the active site. N-linked (GlcNAc...) asparagine glycans are attached at residues Asn343, Asn350, Asn402, Asn507, Asn563, Asn584, Asn623, Asn662, and Asn715.

It belongs to the glycosyl hydrolase 3 family.

Its subcellular location is the secreted. It carries out the reaction Hydrolysis of terminal, non-reducing beta-D-glucosyl residues with release of beta-D-glucose.. It functions in the pathway glycan metabolism; cellulose degradation. In terms of biological role, beta-glucosidases are one of a number of cellulolytic enzymes involved in the degradation of cellulosic biomass. Catalyzes the last step releasing glucose from the inhibitory cellobiose. This chain is Probable beta-glucosidase G (bglG), found in Aspergillus flavus (strain ATCC 200026 / FGSC A1120 / IAM 13836 / NRRL 3357 / JCM 12722 / SRRC 167).